An 812-amino-acid polypeptide reads, in one-letter code: Probable inorganic carbon transporter subunit DabA (812 aa).

C339, D341, H501, and C516 together coordinate Zn(2+).

This sequence belongs to the inorganic carbon transporter (TC 9.A.2) DabA family. In terms of assembly, forms a complex with DabB. Requires Zn(2+) as cofactor.

The protein localises to the cell inner membrane. Its function is as follows. Part of an energy-coupled inorganic carbon pump. The protein is Probable inorganic carbon transporter subunit DabA of Xanthomonas axonopodis pv. citri (strain 306).